The primary structure comprises 267 residues: Methylglyoxal reductase DkgB (267 aa).

Tyr39 acts as the Proton donor in catalysis. His97 is a binding site for substrate. Position 179 to 231 (Met179 to Asn231) interacts with NADP(+).

Belongs to the aldo/keto reductase family. In terms of assembly, monomer.

It is found in the cytoplasm. It catalyses the reaction hydroxyacetone + NADP(+) = methylglyoxal + NADPH + H(+). In terms of biological role, aldo-keto reductase that significantly contributes to cellular methylglyoxal detoxification by catalyzing the NADPH-dependent conversion of methylglyoxal to acetol. This is Methylglyoxal reductase DkgB from Yersinia pestis.